Reading from the N-terminus, the 449-residue chain is Argininosuccinate synthase (449 aa).

Residues 17–25 (AFSGGLDTS) and A43 contribute to the ATP site. Y99 lines the L-citrulline pocket. 2 residues coordinate ATP: G129 and T131. L-aspartate-binding residues include T131, N135, and D136. Residue N135 participates in L-citrulline binding. Position 136 (D136) interacts with ATP. The L-citrulline site is built by R139 and S192. D194 contacts ATP. L-citrulline-binding residues include T201, E203, and E280.

This sequence belongs to the argininosuccinate synthase family. Type 2 subfamily. In terms of assembly, homotetramer.

It is found in the cytoplasm. The enzyme catalyses L-citrulline + L-aspartate + ATP = 2-(N(omega)-L-arginino)succinate + AMP + diphosphate + H(+). The protein operates within amino-acid biosynthesis; L-arginine biosynthesis; L-arginine from L-ornithine and carbamoyl phosphate: step 2/3. This chain is Argininosuccinate synthase, found in Dickeya dadantii (strain 3937) (Erwinia chrysanthemi (strain 3937)).